Here is a 446-residue protein sequence, read N- to C-terminus: Methylenetetrahydrofolate--tRNA-(uracil-5-)-methyltransferase TrmFO (446 aa).

11 to 16 (GGGLAG) serves as a coordination point for FAD.

It belongs to the MnmG family. TrmFO subfamily. FAD serves as cofactor.

Its subcellular location is the cytoplasm. The enzyme catalyses uridine(54) in tRNA + (6R)-5,10-methylene-5,6,7,8-tetrahydrofolate + NADH + H(+) = 5-methyluridine(54) in tRNA + (6S)-5,6,7,8-tetrahydrofolate + NAD(+). It catalyses the reaction uridine(54) in tRNA + (6R)-5,10-methylene-5,6,7,8-tetrahydrofolate + NADPH + H(+) = 5-methyluridine(54) in tRNA + (6S)-5,6,7,8-tetrahydrofolate + NADP(+). Functionally, catalyzes the folate-dependent formation of 5-methyl-uridine at position 54 (M-5-U54) in all tRNAs. The protein is Methylenetetrahydrofolate--tRNA-(uracil-5-)-methyltransferase TrmFO of Oleidesulfovibrio alaskensis (strain ATCC BAA-1058 / DSM 17464 / G20) (Desulfovibrio alaskensis).